The primary structure comprises 1390 residues: ATPase family AAA domain-containing protein 2 (1390 aa).

Residues 40–63 form a disordered region; sequence RSAGAAQKKPAATTAKAGDGSSVK. Residues 42-57 show a composition bias toward low complexity; the sequence is AGAAQKKPAATTAKAG. Phosphoserine is present on residues S60 and S61. K125 participates in a covalent cross-link: Glycyl lysine isopeptide (Lys-Gly) (interchain with G-Cter in SUMO2). Phosphoserine occurs at positions 165 and 170. Residues 216-380 are disordered; that stretch reads LNMYTRGKQK…HFERRRKRSR (165 aa). Residues 223–232 show a composition bias toward basic and acidic residues; that stretch reads KQKDIQRTDE. The segment covering 244 to 288 has biased composition (acidic residues); sequence SSEEGEDQEHEDDGEDEDDEDDDDDDDDDDDDDDEDDEDEEDGEE. K317 participates in a covalent cross-link: Glycyl lysine isopeptide (Lys-Gly) (interchain with G-Cter in SUMO2). S327, S337, S342, and S410 each carry phosphoserine. 467–474 provides a ligand contact to ATP; that stretch reads GPPGTGKT. A phosphoserine mark is found at S746 and S751. Coiled-coil stretches lie at residues 970-994 and 1086-1112; these read LTAE…IFLR and YAII…KKRG. Residues 980–1092 form the Bromo domain; sequence EQEEDTFREL…DTAYAIIKEE (113 aa). Residues 1124-1163 form a disordered region; the sequence is HVMPKQNSTLVGDKRSDPEQNEKLKTPSTPVACSTPAQLK. Residue K1128 forms a Glycyl lysine isopeptide (Lys-Gly) (interchain with G-Cter in SUMO2) linkage. A compositionally biased stretch (basic and acidic residues) spans 1135–1148; that stretch reads GDKRSDPEQNEKLK. Residue S1139 is modified to Phosphoserine. Residue K1148 forms a Glycyl lysine isopeptide (Lys-Gly) (interchain with G-Cter in SUMO2) linkage. Residues T1149, T1152, and T1176 each carry the phosphothreonine modification. A compositionally biased stretch (polar residues) spans 1149-1160; sequence TPSTPVACSTPA. The disordered stretch occupies residues 1181–1242; it reads RKISQAKDDS…SESKLELRNN (62 aa). Basic and acidic residues predominate over residues 1185–1200; it reads QAKDDSQNAIDHKIES. A phosphoserine mark is found at S1200, S1233, and S1235. Over residues 1229 to 1242 the composition is skewed to polar residues; that stretch reads QQNASESKLELRNN. Residue K1236 forms a Glycyl lysine isopeptide (Lys-Gly) (interchain with G-Cter in SUMO2) linkage. Residues S1243 and S1302 each carry the phosphoserine modification. Phosphothreonine is present on T1323.

This sequence belongs to the AAA ATPase family. In terms of assembly, interacts with ESR1 and NCOA3 and these interactions are enhanced by estradiol. Interacts with acetylated lysine residues on histone H1.4, H2A, H2B and H3 (in vitro). In terms of tissue distribution, highly expressed in estrogen receptor positive breast tumors and in osteosarcoma tumors.

It is found in the nucleus. The catalysed reaction is ATP + H2O = ADP + phosphate + H(+). In terms of biological role, may be a transcriptional coactivator of the nuclear receptor ESR1 required to induce the expression of a subset of estradiol target genes, such as CCND1, MYC and E2F1. May play a role in the recruitment or occupancy of CREBBP at some ESR1 target gene promoters. May be required for histone hyperacetylation. Involved in the estrogen-induced cell proliferation and cell cycle progression of breast cancer cells. The chain is ATPase family AAA domain-containing protein 2 (ATAD2) from Homo sapiens (Human).